The sequence spans 510 residues: ATP synthase subunit alpha (510 aa).

ATP is bound at residue 169 to 176 (GDRQTGKT).

This sequence belongs to the ATPase alpha/beta chains family. F-type ATPases have 2 components, CF(1) - the catalytic core - and CF(0) - the membrane proton channel. CF(1) has five subunits: alpha(3), beta(3), gamma(1), delta(1), epsilon(1). CF(0) has four main subunits: a(1), b(1), b'(1) and c(9-12).

Its subcellular location is the cell inner membrane. It carries out the reaction ATP + H2O + 4 H(+)(in) = ADP + phosphate + 5 H(+)(out). Its function is as follows. Produces ATP from ADP in the presence of a proton gradient across the membrane. The alpha chain is a regulatory subunit. The protein is ATP synthase subunit alpha of Rhodospirillum rubrum (strain ATCC 11170 / ATH 1.1.1 / DSM 467 / LMG 4362 / NCIMB 8255 / S1).